We begin with the raw amino-acid sequence, 189 residues long: Probable nicotinate-nucleotide adenylyltransferase (189 aa).

This sequence belongs to the NadD family.

It carries out the reaction nicotinate beta-D-ribonucleotide + ATP + H(+) = deamido-NAD(+) + diphosphate. It participates in cofactor biosynthesis; NAD(+) biosynthesis; deamido-NAD(+) from nicotinate D-ribonucleotide: step 1/1. Its function is as follows. Catalyzes the reversible adenylation of nicotinate mononucleotide (NaMN) to nicotinic acid adenine dinucleotide (NaAD). In Bacillus anthracis (strain CDC 684 / NRRL 3495), this protein is Probable nicotinate-nucleotide adenylyltransferase.